The sequence spans 546 residues: DDB1- and CUL4-associated factor 11 (546 aa).

Residues 1–19 (MGSRNSSSAGSGSGDPSEG) show a composition bias toward low complexity. Residues 1–40 (MGSRNSSSAGSGSGDPSEGLPRRGAGLRRSEEEEEEDEDV) form a disordered region. Residues L49 and S75 each carry the phosphoserine modification. WD repeat units follow at residues 170–210 (SYSQ…RKFK), 216–258 (DVGW…TALD), 263–302 (ERRF…RTLQ), 305–345 (SHED…EDDP), 353–392 (GHQD…SREG), 435–480 (GVLH…KKLT), and 481–520 (NHKA…YFQD). Positions 523–546 (PESEECASAPAPVPQSSTPFSSPQ) are disordered. Polar residues predominate over residues 536–546 (PQSSTPFSSPQ).

As to quaternary structure, interacts with DDB1 and CUL4A.

Its pathway is protein modification; protein ubiquitination. May function as a substrate receptor for CUL4-DDB1 E3 ubiquitin-protein ligase complex. This Homo sapiens (Human) protein is DDB1- and CUL4-associated factor 11 (DCAF11).